The chain runs to 349 residues: Transmembrane protein 255A (349 aa).

Transmembrane regions (helical) follow at residues 30 to 50, 57 to 77, 89 to 109, and 226 to 246; these read IYVT…GLAA, VTVG…LGII, LVAS…CAIV, and TILN…LGGF. Residues 303-329 form a disordered region; that stretch reads PSSPPSGLSDEPQSASPSPSYMWSSSA. Residues 316–329 are compositionally biased toward low complexity; it reads SASPSPSYMWSSSA.

It belongs to the TMEM255 family.

Its subcellular location is the membrane. This chain is Transmembrane protein 255A (TMEM255A), found in Homo sapiens (Human).